The primary structure comprises 927 residues: MAWLRLQPLTSAFLHFGLVTFVLFLNGLRAEAGGSGDVPSTGQNNESCSGSSDCKEGVILPIWYPENPSLGDKIARVIVYFVALIYMFLGVSIIADRFMASIEVITSQEREVTIKKPNGETSTTTIRVWNETVSNLTLMALGSSAPEILLSLIEVCGHGFIAGDLGPSTIVGSAAFNMFIIIGICVYVIPDGETRKIKHLRVFFITAAWSIFAYIWLYMILAVFSPGVVQVWEGLLTLFFFPVCVLLAWVADKRLLFYKYMHKKYRTDKHRGIIIETEGDHPKGIEMDGKMMNSHFLDGNLVPLEGKEVDESRREMIRILKDLKQKHPEKDLDQLVEMANYYALSHQQKSRAFYRIQATRMMTGAGNILKKHAAEQAKKASSMSEVHTDEPEDFISKVFFDPCSYQCLENCGAVLLTVVRKGGDMSKTMYVDYKTEDGSANAGADYEFTEGTVVLKPGETQKEFSVGIIDDDIFEEDEHFFVRLSNVRIEEEQPEEGMPPAIFNSLPLPRAVLASPCVATVTILDDDHAGIFTFECDTIHVSESIGVMEVKVLRTSGARGTVIVPFRTVEGTAKGGGEDFEDTYGELEFKNDETVKTIRVKIVDEEEYERQENFFIALGEPKWMERGISALLLSPDVTDRKLTMEEEEAKRIAEMGKPVLGEHPKLEVIIEESYEFKTTVDKLIKKTNLALVVGTHSWRDQFMEAITVSAAGDEDEDESGEERLPSCFDYVMHFLTVFWKVLFACVPPTEYCHGWACFAVSILIIGMLTAIIGDLASHFGCTIGLKDSVTAVVFVAFGTSVPDTFASKAAALQDVYADASIGNVTGSNAVNVFLGIGLAWSVAAIYWALQGQEFHVSAGTLAFSVTLFTIFAFVCISVLLYRRRPHLGGELGGPRGCKLATTWLFVSLWLLYILFATLEAYCYIKGF.

Residues 1-30 (MAWLRLQPLTSAFLHFGLVTFVLFLNGLRA) form the signal peptide. Residues 31–73 (EAGGSGDVPSTGQNNESCSGSSDCKEGVILPIWYPENPSLGDK) lie on the Extracellular side of the membrane. The N-linked (GlcNAc...) asparagine glycan is linked to Asn45. The chain crosses the membrane as a helical span at residues 74–94 (IARVIVYFVALIYMFLGVSII). At 95-147 (ADRFMASIEVITSQEREVTIKKPNGETSTTTIRVWNETVSNLTLMALGSSAPE) the chain is on the cytoplasmic side. The Alpha-1 repeat unit spans residues 140–180 (ALGSSAPEILLSLIEVCGHGFIAGDLGPSTIVGSAAFNMFI). Residues 148–168 (ILLSLIEVCGHGFIAGDLGPS) form a helical membrane-spanning segment. Thr169 is a topological domain (extracellular). The chain crosses the membrane as a helical span at residues 170-190 (IVGSAAFNMFIIIGICVYVIP). The Cytoplasmic portion of the chain corresponds to 191–202 (DGETRKIKHLRV). A helical transmembrane segment spans residues 203–223 (FFITAAWSIFAYIWLYMILAV). The Extracellular segment spans residues 224-230 (FSPGVVQ). A helical membrane pass occupies residues 231 to 251 (VWEGLLTLFFFPVCVLLAWVA). The Cytoplasmic portion of the chain corresponds to 252–726 (DKRLLFYKYM…DESGEERLPS (475 aa)). The segment at 253 to 272 (KRLLFYKYMHKKYRTDKHRG) is putative calmodulin-binding region. 2 Calx-beta domains span residues 386–485 (VHTD…VRLS) and 519–619 (ATVT…IALG). Ca(2+) contacts are provided by Glu409, Asp445, Asp470, Asp471, Ile473, Glu475, Glu478, Asp525, Asp526, Asp527, Glu543, Asp579, Glu606, Glu607, and Glu672. The helical transmembrane segment at 727–747 (CFDYVMHFLTVFWKVLFACVP) threads the bilayer. Topologically, residues 748 to 754 (PTEYCHG) are extracellular. The chain crosses the membrane as a helical span at residues 755-775 (WACFAVSILIIGMLTAIIGDL). Residues 776–778 (ASH) lie on the Cytoplasmic side of the membrane. The chain crosses the membrane as a helical span at residues 779-799 (FGCTIGLKDSVTAVVFVAFGT). An Alpha-2 repeat occupies 796–832 (AFGTSVPDTFASKAAALQDVYADASIGNVTGSNAVNV). Residues 800-828 (SVPDTFASKAAALQDVYADASIGNVTGSN) lie on the Extracellular side of the membrane. Residue Asn823 is glycosylated (N-linked (GlcNAc...) asparagine). The helical transmembrane segment at 829-849 (AVNVFLGIGLAWSVAAIYWAL) threads the bilayer. The Cytoplasmic portion of the chain corresponds to 850-860 (QGQEFHVSAGT). A helical transmembrane segment spans residues 861-881 (LAFSVTLFTIFAFVCISVLLY). Over 882–903 (RRRPHLGGELGGPRGCKLATTW) the chain is Extracellular. The helical transmembrane segment at 904–924 (LFVSLWLLYILFATLEAYCYI) threads the bilayer. Over 925–927 (KGF) the chain is Cytoplasmic.

This sequence belongs to the Ca(2+):cation antiporter (CaCA) (TC 2.A.19) family. SLC8 subfamily. In terms of assembly, interacts with AKAP1. As to expression, isoform 2 is expressed in brain and skeletal muscle. Isoform 3 is expressed in excitable cells of brain, retina and skeletal muscle. Isoform 4 is expressed in skeletal muscle.

The protein resides in the cell membrane. The protein localises to the perikaryon. It localises to the cell projection. It is found in the dendrite. Its subcellular location is the dendritic spine. The protein resides in the sarcolemma. The protein localises to the cytoplasm. It localises to the sarcoplasm. It is found in the cell junction. Its subcellular location is the mitochondrion outer membrane. The protein resides in the perinuclear region. The protein localises to the endoplasmic reticulum membrane. The enzyme catalyses Ca(2+)(in) + 3 Na(+)(out) = Ca(2+)(out) + 3 Na(+)(in). Its activity is regulated as follows. Calcium transport is down-regulated by Na(+) and stimulated by Ca(2+). In terms of biological role, mediates the electrogenic exchange of Ca(2+) against Na(+) ions across the cell membrane, and thereby contributes to the regulation of cytoplasmic Ca(2+) levels and Ca(2+)-dependent cellular processes. Contributes to cellular Ca(2+) homeostasis in excitable cells, both in muscle and in brain. In a first phase, voltage-gated channels mediate the rapid increase of cytoplasmic Ca(2+) levels due to release of Ca(2+) stores from the endoplasmic reticulum. SLC8A3 mediates the export of Ca(2+) from the cell during the next phase, so that cytoplasmic Ca(2+) levels rapidly return to baseline. Contributes to Ca(2+) transport during excitation-contraction coupling in muscle. In neurons, contributes to the rapid decrease of cytoplasmic Ca(2+) levels back to baseline after neuronal activation, and thereby contributes to modulate synaptic plasticity, learning and memory. Required for normal oligodendrocyte differentiation and for normal myelination. Mediates Ca(2+) efflux from mitochondria and contributes to mitochondrial Ca(2+) ion homeostasis. The sequence is that of Sodium/calcium exchanger 3 (SLC8A3) from Homo sapiens (Human).